We begin with the raw amino-acid sequence, 214 residues long: Pyrrolidone-carboxylate peptidase (214 aa).

Catalysis depends on residues glutamate 79, cysteine 142, and histidine 166.

The protein belongs to the peptidase C15 family. Homotetramer.

It localises to the cytoplasm. It catalyses the reaction Release of an N-terminal pyroglutamyl group from a polypeptide, the second amino acid generally not being Pro.. In terms of biological role, removes 5-oxoproline from various penultimate amino acid residues except L-proline. The sequence is that of Pyrrolidone-carboxylate peptidase from Fusobacterium nucleatum subsp. nucleatum (strain ATCC 25586 / DSM 15643 / BCRC 10681 / CIP 101130 / JCM 8532 / KCTC 2640 / LMG 13131 / VPI 4355).